Here is a 415-residue protein sequence, read N- to C-terminus: Gamma-glutamyl phosphate reductase (415 aa).

It belongs to the gamma-glutamyl phosphate reductase family.

The protein resides in the cytoplasm. The catalysed reaction is L-glutamate 5-semialdehyde + phosphate + NADP(+) = L-glutamyl 5-phosphate + NADPH + H(+). The protein operates within amino-acid biosynthesis; L-proline biosynthesis; L-glutamate 5-semialdehyde from L-glutamate: step 2/2. In terms of biological role, catalyzes the NADPH-dependent reduction of L-glutamate 5-phosphate into L-glutamate 5-semialdehyde and phosphate. The product spontaneously undergoes cyclization to form 1-pyrroline-5-carboxylate. This is Gamma-glutamyl phosphate reductase from Listeria welshimeri serovar 6b (strain ATCC 35897 / DSM 20650 / CCUG 15529 / CIP 8149 / NCTC 11857 / SLCC 5334 / V8).